The following is a 67-amino-acid chain: Probable Sec-independent protein translocase protein TatE (67 aa).

The helical transmembrane segment at 4-21 threads the bilayer; the sequence is ISITKLLVIAALVVLLFG.

The protein belongs to the TatA/E family. TatE subfamily.

It localises to the cell inner membrane. Its function is as follows. Part of the twin-arginine translocation (Tat) system that transports large folded proteins containing a characteristic twin-arginine motif in their signal peptide across membranes. TatE shares overlapping functions with TatA. The polypeptide is Probable Sec-independent protein translocase protein TatE (Citrobacter rodentium (strain ICC168) (Citrobacter freundii biotype 4280)).